Here is a 191-residue protein sequence, read N- to C-terminus: Cathelicidin-related antimicrobial peptide Na_CRAMP (191 aa).

A signal peptide spans 1-22; sequence MEGFFWKTLLVVGALTISGTSS. Positions 23 to 161 are excised as a propeptide; sequence FPHKPLTYEE…DQPKRVKRFK (139 aa). Disulfide bonds link cysteine 81–cysteine 92 and cysteine 103–cysteine 120. The interval 126-154 is disordered; it reads EEEQKQEEGNEEEKEVEKEEKEEDQKDQP. The span at 140 to 154 shows a compositional bias: basic and acidic residues; sequence EVEKEEKEEDQKDQP.

The protein belongs to the cathelicidin family. In terms of tissue distribution, expressed by the venom gland.

It is found in the secreted. The protein resides in the target cell membrane. Functionally, potent antimicrobial peptide against most of Gram-negative bacteria, some Gram-positive bacteria (Bacillus) and some fungi. Adopts an amphipathic alpha helical conformation, that may allow to partition into the target membrane. No hemolytic and cytotoxic activities have been observed on mammalian cells. The polypeptide is Cathelicidin-related antimicrobial peptide Na_CRAMP (Naja atra (Chinese cobra)).